Here is a 210-residue protein sequence, read N- to C-terminus: Large ribosomal subunit protein uL3 (210 aa).

The disordered stretch occupies residues 120-143 (FQGNIKKDGQSRGPMGHGSRYHRR).

The protein belongs to the universal ribosomal protein uL3 family. As to quaternary structure, part of the 50S ribosomal subunit. Forms a cluster with proteins L14 and L19.

In terms of biological role, one of the primary rRNA binding proteins, it binds directly near the 3'-end of the 23S rRNA, where it nucleates assembly of the 50S subunit. This chain is Large ribosomal subunit protein uL3, found in Latilactobacillus sakei subsp. sakei (strain 23K) (Lactobacillus sakei subsp. sakei).